A 97-amino-acid chain; its full sequence is RNA-binding protein Hfq (97 aa).

Residues 10-70 enclose the Sm domain; sequence DPFLNALRKE…ISTIVPARSV (61 aa).

This sequence belongs to the Hfq family. In terms of assembly, homohexamer.

In terms of biological role, RNA chaperone that binds small regulatory RNA (sRNAs) and mRNAs to facilitate mRNA translational regulation in response to envelope stress, environmental stress and changes in metabolite concentrations. Also binds with high specificity to tRNAs. The polypeptide is RNA-binding protein Hfq (Neisseria gonorrhoeae (strain ATCC 700825 / FA 1090)).